The primary structure comprises 87 residues: Small ribosomal subunit protein bS20 (87 aa).

Positions 1–27 (MANIKSAKKRAIQSEKRRQHNASRRSM) are disordered.

It belongs to the bacterial ribosomal protein bS20 family.

In terms of biological role, binds directly to 16S ribosomal RNA. The protein is Small ribosomal subunit protein bS20 of Aeromonas salmonicida (strain A449).